Here is a 514-residue protein sequence, read N- to C-terminus: MNEEQRKASSVDVLAERDKKAEKDYSKYFEHVYQPPNLKEAKKRGKQEVRYNRDFQIDEKYRGMGNERTFLIKTYGCQMNAHDTEVIAGILEALGYQATTDINTADVILINTCAIRENAENKVFSEIGNLKHLKKERPDILIGVCGCMSQEESVVNKILKSYQNVDMIFGTHNIHHLPEILEEAYLSKAMVVEVWSKEGDVIENLPKVREGNIKAWVNIMYGCDKFCTYCIVPFTRGKERSRRPEDIIDEVRELAREGYKEITLLGQNVNSYGKDLQDIEYDLGDLLQAISKIAIPRVRFTTSHPWDFTDHMIDVISEGGNIVPHIHLPVQSGNNAVLKIMGRKYTRESYLDLVKRIKDRIPNVALTTDIIVGYPNESEEQFEETLTLYDEVGFEHAYTYLYSQRDGTPAAKMKDNVPLNVKKERLQRLNKKVGHYSQIAMSKYEGQTVTVLCEGSSKKDDQVLAGYTDKNKLVNFKAPKEMIGKLVEVRIDEAKQYSLNGSFIKEVEPEMVIQ.

Residues 1–21 form a disordered region; sequence MNEEQRKASSVDVLAERDKKA. Residues 68-186 form the MTTase N-terminal domain; that stretch reads RTFLIKTYGC…LPEILEEAYL (119 aa). [4Fe-4S] cluster is bound by residues Cys-77, Cys-113, Cys-147, Cys-223, Cys-227, and Cys-230. The region spanning 209–440 is the Radical SAM core domain; sequence REGNIKAWVN…KKVGHYSQIA (232 aa). The region spanning 442–505 is the TRAM domain; the sequence is SKYEGQTVTV…QYSLNGSFIK (64 aa).

Belongs to the methylthiotransferase family. MiaB subfamily. As to quaternary structure, monomer. Requires [4Fe-4S] cluster as cofactor.

The protein resides in the cytoplasm. It carries out the reaction N(6)-dimethylallyladenosine(37) in tRNA + (sulfur carrier)-SH + AH2 + 2 S-adenosyl-L-methionine = 2-methylsulfanyl-N(6)-dimethylallyladenosine(37) in tRNA + (sulfur carrier)-H + 5'-deoxyadenosine + L-methionine + A + S-adenosyl-L-homocysteine + 2 H(+). Catalyzes the methylthiolation of N6-(dimethylallyl)adenosine (i(6)A), leading to the formation of 2-methylthio-N6-(dimethylallyl)adenosine (ms(2)i(6)A) at position 37 in tRNAs that read codons beginning with uridine. The polypeptide is tRNA-2-methylthio-N(6)-dimethylallyladenosine synthase (Staphylococcus aureus (strain USA300 / TCH1516)).